The following is a 186-amino-acid chain: dCTP deaminase (186 aa).

107–112 lines the dCTP pocket; it reads KSSYAR. Glu133 functions as the Proton donor/acceptor in the catalytic mechanism. DCTP contacts are provided by Gln152, Tyr166, and Gln176.

It belongs to the dCTP deaminase family. As to quaternary structure, homotrimer.

The enzyme catalyses dCTP + H2O + H(+) = dUTP + NH4(+). Its pathway is pyrimidine metabolism; dUMP biosynthesis; dUMP from dCTP (dUTP route): step 1/2. Catalyzes the deamination of dCTP to dUTP. The polypeptide is dCTP deaminase (Chloroflexus aggregans (strain MD-66 / DSM 9485)).